Here is a 358-residue protein sequence, read N- to C-terminus: Na(+)/H(+) exchange regulatory cofactor NHE-RF1 (358 aa).

S2 is subject to N-acetylserine. A phosphoserine mark is found at S2 and S46. One can recognise a PDZ 1 domain in the interval L14–D94. Low complexity predominate over residues Q114–E134. The tract at residues Q114–R151 is disordered. A compositionally biased stretch (basic and acidic residues) spans N135–R151. One can recognise a PDZ 2 domain in the interval L154–E234. Residues S247–L358 form a disordered region. Positions L272 to S290 are enriched in low complexity. S279, S289, and S290 each carry phosphoserine. At T292 the chain carries Phosphothreonine. 3 positions are modified to phosphoserine: S293, S298, and S301. Residues T308–L327 are compositionally biased toward low complexity. Residues W348–L358 show a composition bias toward basic and acidic residues.

As to quaternary structure, homodimer, and heterodimer with NHERF2. Binds the N-termini of EZR, RDX and MSN. Binds the C-termini of PDGFRA, PDGFRB, ADRB2, NOS2 and CFTR. Binds ARHGAP17, EPI64, RACK1, OPRK1, GNAQ, CTNNB1 and PLCB3. Binds PDZK1. Interacts with CLCN3. Binds the C-terminus of PAG1. In resting T-cells, part of a PAG1-NHERF1-MSN complex which is disrupted upon TCR activation. Forms a complex with CFTR and SLC4A7. Forms a complex with SLC4A7 and ATP6V1B1. Interacts with TRPC4 (via the PDZ-binding domain). Directly interacts with HTR4. Interacts (via the PDZ 1 domain) with PODXL (via the C-terminal PDZ-binding motif DTHL); interaction is not detected in glomerular epithelium cells. Interacts (via the PDZ 1 domain) with PODXL (via the C-terminal PDZ-binding motif DTHL); the interaction take place early in the secretory pathway and is necessary for its apical membrane sorting. Interacts with SLC26A3. Interacts with MCC. Interacts with SLC34A1. Interacts (via the PDZ domains) with SLC26A6 isoform 4 and isoform 5. Interacts (via PDZ domains) with ACE2 (via PDZ-binding motif); the interaction may enhance ACE2 membrane residence. In terms of processing, phosphorylated on serine residues. As to expression, detected in ileum, duodenum and in kidney, where it is found in the glomerulus, the proximal tubule, the thick ascending limb of Henle's loop and the cortical collecting duct.

Its subcellular location is the cytoplasm. It is found in the apical cell membrane. It localises to the cell projection. The protein resides in the filopodium. The protein localises to the ruffle. Its subcellular location is the microvillus. It is found in the endomembrane system. In terms of biological role, scaffold protein that connects plasma membrane proteins with members of the ezrin/moesin/radixin family and thereby helps to link them to the actin cytoskeleton and to regulate their surface expression. Necessary for recycling of internalized ADRB2. Was first known to play a role in the regulation of the activity and subcellular location of SLC9A3. Necessary for cAMP-mediated phosphorylation and inhibition of SLC9A3. Involved in sperm capacitation. May participate in the regulation of the chloride and bicarbonate homeostasis in spermatozoa. May enhance Wnt signaling. May participate in HTR4 targeting to microvilli. Involved in the regulation of phosphate reabsorption in the renal proximal tubules. In Oryctolagus cuniculus (Rabbit), this protein is Na(+)/H(+) exchange regulatory cofactor NHE-RF1 (NHERF1).